We begin with the raw amino-acid sequence, 136 residues long: MTERTLVLIKPDGVRRGLVGEVLNRIERKGLTLAALELKNVDDATARAHYAEHAEKPFFGSLLEFITSGPLVAAVLEGPRAIAAFRQIAGGTDPVEKAATGSIRGDFALETQENLVHGSDSPESAAREIALWFPAL.

ATP is bound by residues Lys-10, Phe-58, Arg-86, Thr-92, Arg-104, and Asn-114. The Pros-phosphohistidine intermediate role is filled by His-117.

It belongs to the NDK family. Homotetramer. Mg(2+) serves as cofactor.

It is found in the cytoplasm. The catalysed reaction is a 2'-deoxyribonucleoside 5'-diphosphate + ATP = a 2'-deoxyribonucleoside 5'-triphosphate + ADP. It carries out the reaction a ribonucleoside 5'-diphosphate + ATP = a ribonucleoside 5'-triphosphate + ADP. Major role in the synthesis of nucleoside triphosphates other than ATP. The ATP gamma phosphate is transferred to the NDP beta phosphate via a ping-pong mechanism, using a phosphorylated active-site intermediate. The chain is Nucleoside diphosphate kinase from Mycobacteroides abscessus (strain ATCC 19977 / DSM 44196 / CCUG 20993 / CIP 104536 / JCM 13569 / NCTC 13031 / TMC 1543 / L948) (Mycobacterium abscessus).